The following is a 403-amino-acid chain: Probable tRNA sulfurtransferase (403 aa).

Positions 60 to 165 constitute a THUMP domain; that stretch reads QLVEERLKPI…KEGVFLSCRT (106 aa). ATP contacts are provided by residues 183-184, 208-209, Arg-265, Gly-287, and Gln-296; these read ML and HF.

The protein belongs to the ThiI family.

It localises to the cytoplasm. The catalysed reaction is [ThiI sulfur-carrier protein]-S-sulfanyl-L-cysteine + a uridine in tRNA + 2 reduced [2Fe-2S]-[ferredoxin] + ATP + H(+) = [ThiI sulfur-carrier protein]-L-cysteine + a 4-thiouridine in tRNA + 2 oxidized [2Fe-2S]-[ferredoxin] + AMP + diphosphate. The enzyme catalyses [ThiS sulfur-carrier protein]-C-terminal Gly-Gly-AMP + S-sulfanyl-L-cysteinyl-[cysteine desulfurase] + AH2 = [ThiS sulfur-carrier protein]-C-terminal-Gly-aminoethanethioate + L-cysteinyl-[cysteine desulfurase] + A + AMP + 2 H(+). Its pathway is cofactor biosynthesis; thiamine diphosphate biosynthesis. Catalyzes the ATP-dependent transfer of a sulfur to tRNA to produce 4-thiouridine in position 8 of tRNAs, which functions as a near-UV photosensor. Also catalyzes the transfer of sulfur to the sulfur carrier protein ThiS, forming ThiS-thiocarboxylate. This is a step in the synthesis of thiazole, in the thiamine biosynthesis pathway. The sulfur is donated as persulfide by IscS. This chain is Probable tRNA sulfurtransferase, found in Listeria monocytogenes serotype 4b (strain CLIP80459).